Reading from the N-terminus, the 330-residue chain is Protein IN CHLOROPLAST ATPASE BIOGENESIS, chloroplastic (330 aa).

A chloroplast-targeting transit peptide spans 1–35 (MGSISMHITPSTALPIRHFRARVSCCSSGHVSFIK).

In terms of assembly, interacts with ATPC1.

Its subcellular location is the plastid. The protein localises to the chloroplast stroma. Its function is as follows. Involved in the assembly of the F(1) ATP synthase in chloroplast thylakoid membranes. Functions downstream of the CPN60 chaperones to promote assembly of the catalytically active core of the chloroplast ATP synthase. Assists the assembly of the ATP synthase gamma subunit into the active F(1) core downstream of CPN60-mediated folding, which is critical for the biogenesis of the chloroplast ATP synthase. The chain is Protein IN CHLOROPLAST ATPASE BIOGENESIS, chloroplastic from Arabidopsis thaliana (Mouse-ear cress).